A 261-amino-acid chain; its full sequence is Bidirectional sugar transporter SWEET1b (261 aa).

Topologically, residues 1–6 are extracellular; sequence MEDLAK. The helical transmembrane segment at 7–27 threads the bilayer; the sequence is FLFGVSGNVIALFLFLSPVPT. Positions 7–95 constitute a MtN3/slv 1 domain; the sequence is FLFGVSGNVI…VVFLVFASTH (89 aa). Over 28 to 42 the chain is Cytoplasmic; the sequence is FWRIIRRKSTEDFSG. Residues 43 to 63 traverse the membrane as a helical segment; it reads VPYNMTLINCLLSAWYGLPFV. Residues 64-71 lie on the Extracellular side of the membrane; it reads SPNNILVS. The helical transmembrane segment at 72-92 threads the bilayer; it reads TINGAGAVIETAYVVVFLVFA. At 93–101 the chain is on the cytoplasmic side; that stretch reads STHKTRLRT. Residues 102 to 122 form a helical membrane-spanning segment; sequence LGLAAAVASVFAAVALVSLLA. The Extracellular portion of the chain corresponds to 123-129; sequence LHGQHRK. A helical transmembrane segment spans residues 130-150; it reads LLCGVAATVCSICMYASPLSI. A MtN3/slv 2 domain is found at 133–215; it reads GVAATVCSIC…VLYAIYRNNK (83 aa). Over 151 to 164 the chain is Cytoplasmic; the sequence is MRLVIKTKSVEYMP. The chain crosses the membrane as a helical span at residues 165–185; that stretch reads FLLSLAVFLCGTSWFIYGLLG. Residues 186–189 are Extracellular-facing; that stretch reads RDPF. The helical transmembrane segment at 190–210 threads the bilayer; it reads VTIPNGCGSFLGAVQLVLYAI. The Cytoplasmic portion of the chain corresponds to 211 to 261; sequence YRNNKGAGGGSGGKQAGDDDVEMAEGRNNKVADGGAAEDDSTAGGKAGTEV. Residues 218–261 are disordered; it reads GGGSGGKQAGDDDVEMAEGRNNKVADGGAAEDDSTAGGKAGTEV.

It belongs to the SWEET sugar transporter family. As to quaternary structure, forms homodimers.

The protein localises to the cell membrane. The catalysed reaction is D-glucose(out) = D-glucose(in). It catalyses the reaction D-galactose(in) = D-galactose(out). Mediates transport of sugars across the plasma membrane. Can transport glucose and galactose, but not fructose, mannose and sucrose. In Oryza sativa subsp. indica (Rice), this protein is Bidirectional sugar transporter SWEET1b (SWEET1B).